The chain runs to 298 residues: Ribosomal RNA small subunit methyltransferase A (298 aa).

Residues asparagine 35, leucine 37, glycine 62, glutamate 83, aspartate 108, and asparagine 133 each contribute to the S-adenosyl-L-methionine site.

Belongs to the class I-like SAM-binding methyltransferase superfamily. rRNA adenine N(6)-methyltransferase family. RsmA subfamily.

It is found in the cytoplasm. The catalysed reaction is adenosine(1518)/adenosine(1519) in 16S rRNA + 4 S-adenosyl-L-methionine = N(6)-dimethyladenosine(1518)/N(6)-dimethyladenosine(1519) in 16S rRNA + 4 S-adenosyl-L-homocysteine + 4 H(+). In terms of biological role, specifically dimethylates two adjacent adenosines (A1518 and A1519) in the loop of a conserved hairpin near the 3'-end of 16S rRNA in the 30S particle. May play a critical role in biogenesis of 30S subunits. This Streptococcus pyogenes serotype M4 (strain MGAS10750) protein is Ribosomal RNA small subunit methyltransferase A.